The following is a 206-amino-acid chain: Large ribosomal subunit protein uL22m (206 aa).

A mitochondrion-targeting transit peptide spans 1 to 40 (MAAALLRELGALRVPNLRIWATQTLRVLPPSCIHTSASLD).

Belongs to the universal ribosomal protein uL22 family. In terms of assembly, component of the mitochondrial ribosome large subunit (39S) which comprises a 16S rRNA and about 50 distinct proteins.

The protein localises to the mitochondrion. This chain is Large ribosomal subunit protein uL22m (Mrpl22), found in Mus musculus (Mouse).